The sequence spans 631 residues: tRNA uridine 5-carboxymethylaminomethyl modification enzyme MnmG (631 aa).

Residues G15–G20, V127, and S182 contribute to the FAD site. G275–F289 serves as a coordination point for NAD(+). Residue Q372 coordinates FAD.

This sequence belongs to the MnmG family. As to quaternary structure, homodimer. Heterotetramer of two MnmE and two MnmG subunits. FAD is required as a cofactor.

It is found in the cytoplasm. Its function is as follows. NAD-binding protein involved in the addition of a carboxymethylaminomethyl (cmnm) group at the wobble position (U34) of certain tRNAs, forming tRNA-cmnm(5)s(2)U34. The protein is tRNA uridine 5-carboxymethylaminomethyl modification enzyme MnmG of Buchnera aphidicola subsp. Schizaphis graminum (strain Sg).